Consider the following 327-residue polypeptide: Ran-specific GTPase-activating protein 2 (327 aa).

Disordered regions lie at residues 1–96 and 109–205; these read MSET…KKED and GFGV…KQEV. A compositionally biased stretch (basic and acidic residues) spans 24–83; that stretch reads PIDKLDGTPKRPREKDQDEQAEETSDKSEAPNKNDEEKKEEGKKDQEPSHKKIKVDDGKT. At Thr-31 the chain carries Phosphothreonine. Polar residues predominate over residues 122–133; it reads ATTSTESLPASD. The segment covering 140–152 has biased composition (low complexity); it reads FAFGSGLSFGSGF. Basic and acidic residues-rich tracts occupy residues 157–179 and 189–205; these read NKTE…KVHS and EDTK…KQEV. Ser-179 carries the post-translational modification Phosphoserine. The RanBD1 domain maps to 191-327; the sequence is TKDKPKPLKL…YNIIVKSVPK (137 aa).

In terms of assembly, interacts with GSP1, XPO1 and SRM1.

It localises to the nucleus. Functionally, important for the export of protein containing nuclear export signal (NES) out of the nucleus. Stimulates the GTPase activity of GSP1. This Saccharomyces cerevisiae (strain ATCC 204508 / S288c) (Baker's yeast) protein is Ran-specific GTPase-activating protein 2 (YRB2).